A 30-amino-acid chain; its full sequence is Brevinin-2Rg (30 aa).

C24 and C30 form a disulfide bridge.

In terms of tissue distribution, expressed by the skin glands.

The protein localises to the secreted. Functionally, antimicrobial peptide. The protein is Brevinin-2Rg of Pelophylax ridibundus (Marsh frog).